The chain runs to 306 residues: Elongation factor Ts (306 aa).

Positions 80-83 (TDFV) are involved in Mg(2+) ion dislocation from EF-Tu.

It belongs to the EF-Ts family.

The protein localises to the cytoplasm. Associates with the EF-Tu.GDP complex and induces the exchange of GDP to GTP. It remains bound to the aminoacyl-tRNA.EF-Tu.GTP complex up to the GTP hydrolysis stage on the ribosome. The sequence is that of Elongation factor Ts from Methylorubrum extorquens (strain CM4 / NCIMB 13688) (Methylobacterium extorquens).